Here is a 451-residue protein sequence, read N- to C-terminus: Endosomal transmembrane epsin interactor 1 (451 aa).

Positions 1–29 (MILLVNLFVLLSVVCILLNLAGFILGCQG) are cleaved as a signal peptide. The Lumenal portion of the chain corresponds to 30–85 (AQFVSSVPRCDLVDLGEGKICFCCEEFQPAKCTDKENALKLFPVQPCSAVHLLLKK). Residues 86 to 106 (VLFALCALNALTTTVCLVAAA) form a helical membrane-spanning segment. Residues 107–451 (LRYLQIFASR…LIGVIRETVL (345 aa)) are Cytoplasmic-facing. Positions 107–451 (LRYLQIFASR…LIGVIRETVL (345 aa)) are mediates interaction with EPN1. 2 short sequence motifs (PPxY; mediates interaction with ITCH) span residues 148 to 151 (PPSY) and 194 to 197 (PPPY). Positions 204-213 (TDQEQESSFQ) are enriched in polar residues. The disordered stretch occupies residues 204–224 (TDQEQESSFQMPEGPETAASP). K274 participates in a covalent cross-link: Glycyl lysine isopeptide (Lys-Gly) (interchain with G-Cter in ubiquitin). The residue at position 275 (S275) is a Phosphoserine. K365 is covalently cross-linked (Glycyl lysine isopeptide (Lys-Gly) (interchain with G-Cter in ubiquitin)).

The protein belongs to the ENTREP family. Interacts with ITCH; enhances the ubiquitination of CXCR4 by ITCH and the subsequent endocytosis and desensitization of the receptor. Interacts with EPN1.

Its subcellular location is the early endosome membrane. It is found in the late endosome membrane. The protein localises to the recycling endosome membrane. The protein resides in the cell membrane. Functionally, functions as an activator of the E3 ubiquitin protein ligase ITCH in the ubiquitination of the CXCL12-activated CXCR4 receptor. Thereby, triggers CXCR4 endocytosis and desensitization, negatively regulating the CXCL12/CXCR4 signaling pathway. The sequence is that of Endosomal transmembrane epsin interactor 1 from Mus musculus (Mouse).